The following is a 156-amino-acid chain: Lipoprotein signal peptidase (156 aa).

Transmembrane regions (helical) follow at residues Ile52 to Val72 and Phe85 to Phe105. Active-site residues include Asp111 and Asp129. A helical transmembrane segment spans residues Asn121–Leu141.

This sequence belongs to the peptidase A8 family.

The protein resides in the cell membrane. It carries out the reaction Release of signal peptides from bacterial membrane prolipoproteins. Hydrolyzes -Xaa-Yaa-Zaa-|-(S,diacylglyceryl)Cys-, in which Xaa is hydrophobic (preferably Leu), and Yaa (Ala or Ser) and Zaa (Gly or Ala) have small, neutral side chains.. The protein operates within protein modification; lipoprotein biosynthesis (signal peptide cleavage). In terms of biological role, this protein specifically catalyzes the removal of signal peptides from prolipoproteins. This Halalkalibacterium halodurans (strain ATCC BAA-125 / DSM 18197 / FERM 7344 / JCM 9153 / C-125) (Bacillus halodurans) protein is Lipoprotein signal peptidase.